A 416-amino-acid chain; its full sequence is Formyl-CoA:oxalate CoA-transferase (416 aa).

CoA contacts are provided by residues 17–18, arginine 38, 72–75, 96–98, histidine 104, and 137–140; these read QS, LNTK, NFH, and KAYE. Aspartate 169 functions as the Nucleophile in the catalytic mechanism. Residue 248-250 participates in substrate binding; the sequence is GGQ. Residue 273–275 participates in CoA binding; sequence QEQ.

This sequence belongs to the CoA-transferase III family. Frc subfamily. In terms of assembly, homodimer.

The enzyme catalyses formyl-CoA + oxalate = oxalyl-CoA + formate. The protein operates within metabolic intermediate degradation; oxalate degradation; CO(2) and formate from oxalate: step 1/2. Functionally, involved in the catabolism of oxalate and in the adapatation to low pH via the induction of the oxalate-dependent acid tolerance response (ATR). Catalyzes the transfer of the CoA moiety from formyl-CoA to oxalate. In Escherichia coli O17:K52:H18 (strain UMN026 / ExPEC), this protein is Formyl-CoA:oxalate CoA-transferase.